The chain runs to 251 residues: CDP-diacylglycerol pyrophosphatase (251 aa).

The chain crosses the membrane as a helical span at residues 5–25 (GYFLLAVIVIVAAAGVGYWKF).

The protein belongs to the Cdh family.

The protein localises to the cell inner membrane. It carries out the reaction a CDP-1,2-diacyl-sn-glycerol + H2O = a 1,2-diacyl-sn-glycero-3-phosphate + CMP + 2 H(+). It participates in phospholipid metabolism; CDP-diacylglycerol degradation; phosphatidate from CDP-diacylglycerol: step 1/1. In Salmonella paratyphi A (strain ATCC 9150 / SARB42), this protein is CDP-diacylglycerol pyrophosphatase.